A 314-amino-acid chain; its full sequence is MSVWAIGDLQGCYDITQRLLEKINFDPAQDTLWFCGDLVNRGGQSLETLRLVHSLRAHSVVVLGNHDLSLLAIGARSEEEQRKVNPDLLRIVMAEDRDALLDWLRMQKLAHVDRELGWMMIHAGLAPKWTTQMAEKHAREVEQQLQGGGYRKLLRNMYGDQPGWSPGLSGYDRSRAIINLFTRMRYCTPRGRIATDDKGTPGTQAQGLYPWFEVPGRVERDLKIVCGHWSALGLTITQGVHAIDTGAVWGGKLTALQLDTDELRVVQVPGNPITHPPKTAQRPRQPRRRQRQRGGDQAQTGPAPTPASTGPAGG.

A disordered region spans residues 267-314; it reads QVPGNPITHPPKTAQRPRQPRRRQRQRGGDQAQTGPAPTPASTGPAGG. Residues 297–314 show a composition bias toward low complexity; it reads QAQTGPAPTPASTGPAGG.

It belongs to the Ap4A hydrolase family.

It carries out the reaction P(1),P(4)-bis(5'-adenosyl) tetraphosphate + H2O = 2 ADP + 2 H(+). Its function is as follows. Hydrolyzes diadenosine 5',5'''-P1,P4-tetraphosphate to yield ADP. In Xanthomonas axonopodis pv. citri (strain 306), this protein is Bis(5'-nucleosyl)-tetraphosphatase, symmetrical.